A 991-amino-acid chain; its full sequence is Pro-apoptotic serine protease NMA111 (991 aa).

The segment at 1 to 57 (MTVGKRKLSNGTVNEAKRLDDHVPVVAPSTNPDFENANGEDNEDIDDYSSEGEMSPQ) is disordered. The span at 38–50 (NGEDNEDIDDYSS) shows a compositional bias: acidic residues. A serine protease region spans residues 86–269 (HVSNFDTESS…LPVYRPLRAL (184 aa)). Residues His-117, Asp-148, and Ser-231 each act as charge relay system in the active site. 2 PDZ domains span residues 296 to 374 (RRLG…QRNG) and 885 to 957 (PHHG…VSFD).

Belongs to the peptidase S1C family.

It is found in the nucleus. Its function is as follows. Nuclear serine protease which mediates apoptosis. The polypeptide is Pro-apoptotic serine protease NMA111 (NMA111) (Meyerozyma guilliermondii (strain ATCC 6260 / CBS 566 / DSM 6381 / JCM 1539 / NBRC 10279 / NRRL Y-324) (Yeast)).